We begin with the raw amino-acid sequence, 79 residues long: Mycoredoxin 1 (79 aa).

Residues 1–79 form the Glutaredoxin domain; it reads MSNVTIYATD…EVIAKIEALA (79 aa).

The protein belongs to the glutaredoxin family.

The protein resides in the cytoplasm. The catalysed reaction is [mycoredoxin]-L-cysteine + arseno-mycothiol + H(+) = [mycoredoxin]-S-mycothiol-L-cysteine + arsenite. Its function is as follows. Involved in defense against toxic arsenate. Involved in the mycothiol/myoredoxin redox pathway which uses a mycothioltransferase mechanism; functions as a monothiol mixed disulfide reductase and is recycled by a second mycothiol forming mycothione which in turn is reduced in a NADPH-dependent manner. This Corynebacterium glutamicum (strain ATCC 13032 / K051) protein is Mycoredoxin 1 (mrx1).